A 396-amino-acid polypeptide reads, in one-letter code: Probable sugar efflux transporter (396 aa).

The next 12 membrane-spanning stretches (helical) occupy residues 15-35, 50-70, 81-101, 103-123, 136-156, 170-190, 209-229, 246-266, 275-295, 299-319, 333-353, and 364-384; these read VVTL…PVGL, VGIM…PFML, LICL…SWSF, VLVI…SITA, AQAL…GLPL, FFAI…LLPL, PALM…YTAY, FATA…VIFG, ALVS…LPAA, IHLG…GLGM, VAMA…ALVG, and MIGY…IIIF.

It belongs to the major facilitator superfamily. SotB (TC 2.A.1.2) family.

It localises to the cell inner membrane. Functionally, involved in the efflux of sugars. The physiological role may be the reduction of the intracellular concentration of toxic sugars or sugar metabolites. In Escherichia coli O157:H7 (strain EC4115 / EHEC), this protein is Probable sugar efflux transporter.